Consider the following 643-residue polypeptide: uncharacterized protein (643 aa).

Positions 561–643 are disordered; it reads LNQELETSSE…GADRKKRGVY (83 aa). The span at 591-606 shows a compositional bias: gly residues; sequence SRGGRGGRGARGGNRG. The segment covering 617–635 has biased composition (basic and acidic residues); that stretch reads GHDRQMKEKHKSDIKQRGA.

This is an uncharacterized protein from Caenorhabditis elegans.